A 443-amino-acid polypeptide reads, in one-letter code: MEAYIRQKRASPGMVQASDLQINRPMSGMRSNSRELHAYDGPMQFISSPQNPDQILTNGSPGGINPVAMNTSRNHSNNMRSLSTINQEADLIEEISSHELEDEESSPVTVIEQHQQSASHSANSTQSQKPRARQHSFSDNLDEDDYTNRNVAGAAPVRPAGMASSPYKDATLDGSSNGTGNGTGGESEGDVIGNIDQFVMQPAPQGVLYKCRITRDRKGMDRGLFPIYYLHLERDYGKKIFLLGGRKRKKSKTSNYIVSCDPTDLSRNADGFCGKLRSNVFGTSFTVFDNGNKESTESPRLDLAVIIYDTNILGFKGPRNMTVILPGMTEDDQRVKISSADPKQQGILDLWKMKNMDNIVELHNKTPVWNDETQSYVLNFHGRVTQASVKNFQLVHDSDPEYIVMQFGRTSEDVFTMDYRYPLCAMQAFAIALSSFDGKIACE.

2 disordered regions span residues 57–80 (TNGSPGGINPVAMNTSRNHSNNMR) and 98–191 (HELE…EGDV). Over residues 68 to 80 (AMNTSRNHSNNMR) the composition is skewed to polar residues. Residues 113-128 (QHQQSASHSANSTQSQ) are compositionally biased toward low complexity. Ser136 is modified (phosphoserine). Residues 177–186 (NGTGNGTGGE) show a composition bias toward gly residues.

The protein belongs to the TUB family.

The protein resides in the cytoplasm. It localises to the nucleus. The protein localises to the cell projection. Its subcellular location is the cilium membrane. It is found in the rhabdomere. The protein is Protein king tubby of Drosophila simulans (Fruit fly).